Reading from the N-terminus, the 148-residue chain is Large ribosomal subunit protein bL9 (148 aa).

Positions 46–65 (QLQQQNKHAEQEREQEIEDA) are disordered. Residues 52–65 (KHAEQEREQEIEDA) are compositionally biased toward basic and acidic residues.

Belongs to the bacterial ribosomal protein bL9 family.

In terms of biological role, binds to the 23S rRNA. The sequence is that of Large ribosomal subunit protein bL9 from Staphylococcus carnosus (strain TM300).